We begin with the raw amino-acid sequence, 566 residues long: Sulfite reductase [NADPH] hemoprotein beta-component (566 aa).

[4Fe-4S] cluster contacts are provided by cysteine 430, cysteine 436, cysteine 475, and cysteine 479. Residue cysteine 479 coordinates siroheme.

This sequence belongs to the nitrite and sulfite reductase 4Fe-4S domain family. As to quaternary structure, alpha(8)-beta(8). The alpha component is a flavoprotein, the beta component is a hemoprotein. Siroheme serves as cofactor. Requires [4Fe-4S] cluster as cofactor.

The enzyme catalyses hydrogen sulfide + 3 NADP(+) + 3 H2O = sulfite + 3 NADPH + 4 H(+). It participates in sulfur metabolism; hydrogen sulfide biosynthesis; hydrogen sulfide from sulfite (NADPH route): step 1/1. Functionally, component of the sulfite reductase complex that catalyzes the 6-electron reduction of sulfite to sulfide. This is one of several activities required for the biosynthesis of L-cysteine from sulfate. The polypeptide is Sulfite reductase [NADPH] hemoprotein beta-component (Baumannia cicadellinicola subsp. Homalodisca coagulata).